We begin with the raw amino-acid sequence, 217 residues long: Orotidine 5'-phosphate decarboxylase (217 aa).

Residues D14, K36, 64-73 (DFKVADIPST), S120, 172-182 (PGVGAQGGNLS), G197, and R198 each bind substrate. The Proton donor role is filled by K66.

Belongs to the OMP decarboxylase family. Type 1 subfamily. As to quaternary structure, homodimer.

It carries out the reaction orotidine 5'-phosphate + H(+) = UMP + CO2. Its pathway is pyrimidine metabolism; UMP biosynthesis via de novo pathway; UMP from orotate: step 2/2. In terms of biological role, catalyzes the decarboxylation of orotidine 5'-monophosphate (OMP) to uridine 5'-monophosphate (UMP). The protein is Orotidine 5'-phosphate decarboxylase of Methanococcus maripaludis (strain DSM 14266 / JCM 13030 / NBRC 101832 / S2 / LL).